Here is a 380-residue protein sequence, read N- to C-terminus: Probable pectin lyase A (380 aa).

Positions 1–20 are cleaved as a signal peptide; that stretch reads MRYTSLFTAVTAALASTAAA. Disulfide bonds link Cys-83-Cys-102 and Cys-92-Cys-226. Asn-129 carries an N-linked (GlcNAc...) asparagine glycan. Arg-256 is an active-site residue. Cys-323 and Cys-331 form a disulfide bridge.

It belongs to the polysaccharide lyase 1 family.

It is found in the secreted. It carries out the reaction Eliminative cleavage of (1-&gt;4)-alpha-D-galacturonan methyl ester to give oligosaccharides with 4-deoxy-6-O-methyl-alpha-D-galact-4-enuronosyl groups at their non-reducing ends.. Its function is as follows. Pectinolytic enzymes consist of four classes of enzymes: pectin lyase, polygalacturonase, pectin methylesterase and rhamnogalacturonase. Among pectinolytic enzymes, pectin lyase is the most important in depolymerization of pectin, since it cleaves internal glycosidic bonds of highly methylated pectins. This is Probable pectin lyase A (pelA) from Aspergillus fumigatus (strain ATCC MYA-4609 / CBS 101355 / FGSC A1100 / Af293) (Neosartorya fumigata).